Consider the following 86-residue polypeptide: Small ribosomal subunit protein bS16 (86 aa).

The protein belongs to the bacterial ribosomal protein bS16 family.

This is Small ribosomal subunit protein bS16 from Stenotrophomonas maltophilia (strain R551-3).